The sequence spans 1158 residues: cGMP-specific 3',5'-cyclic phosphodiesterase (1158 aa).

Disordered stretches follow at residues 1–137 (MTDV…SQHD) and 195–216 (SPTV…SIPE). The segment covering 30-71 (ATTSAAASASSSQAKPLTNGAKKAATAAAAAGAEEGGASASN) has biased composition (low complexity). The span at 108 to 135 (GSTSKSSSIHTQTSQQERAGRPTSSASQ) shows a compositional bias: polar residues. The span at 202-215 (SPRSLSNSSASSIP) shows a compositional bias: low complexity. 2 consecutive GAF domains span residues 242-394 (DIDV…GIGI) and 426-640 (NLEC…GLGI). The region spanning 670–993 (SQDQTEKLTQ…RNWQDLAEKV (324 aa)) is the PDEase domain. Residue histidine 746 is the Proton donor of the active site. A divalent metal cation-binding residues include histidine 750, histidine 786, aspartate 787, and aspartate 897. Disordered regions lie at residues 1034-1065 (QSQQ…TGAL) and 1097-1158 (VSED…CALL). The segment covering 1041–1052 (GSEDSHTPEHQR) has biased composition (basic and acidic residues). Positions 1114–1130 (AAGSMGRMSASSSTSSA) are enriched in low complexity. Residues 1148–1158 (SKKRSKLCALL) are compositionally biased toward basic residues. Cysteine 1155 is subject to Cysteine methyl ester. Cysteine 1155 is lipidated: S-farnesyl cysteine. A propeptide spans 1156–1158 (ALL) (removed in mature form).

This sequence belongs to the cyclic nucleotide phosphodiesterase family. Interacts with PrBP. Requires a divalent metal cation as cofactor.

Its subcellular location is the cell membrane. It carries out the reaction 3',5'-cyclic GMP + H2O = GMP + H(+). Has a role regulating cGMP transport in Malpighian tubule principal cells. The polypeptide is cGMP-specific 3',5'-cyclic phosphodiesterase (Drosophila ananassae (Fruit fly)).